Here is a 239-residue protein sequence, read N- to C-terminus: Pyridoxine 5'-phosphate synthase (239 aa).

Asn-7 contacts 3-amino-2-oxopropyl phosphate. Residue 9-10 coordinates 1-deoxy-D-xylulose 5-phosphate; it reads DH. Arg-18 lines the 3-amino-2-oxopropyl phosphate pocket. The active-site Proton acceptor is His-43. 1-deoxy-D-xylulose 5-phosphate contacts are provided by Arg-45 and His-50. Residue Glu-70 is the Proton acceptor of the active site. Thr-100 provides a ligand contact to 1-deoxy-D-xylulose 5-phosphate. The Proton donor role is filled by His-191. 3-amino-2-oxopropyl phosphate contacts are provided by residues Gly-192 and 213–214; that span reads GH.

This sequence belongs to the PNP synthase family. In terms of assembly, homooctamer; tetramer of dimers.

The protein resides in the cytoplasm. The enzyme catalyses 3-amino-2-oxopropyl phosphate + 1-deoxy-D-xylulose 5-phosphate = pyridoxine 5'-phosphate + phosphate + 2 H2O + H(+). It functions in the pathway cofactor biosynthesis; pyridoxine 5'-phosphate biosynthesis; pyridoxine 5'-phosphate from D-erythrose 4-phosphate: step 5/5. Functionally, catalyzes the complicated ring closure reaction between the two acyclic compounds 1-deoxy-D-xylulose-5-phosphate (DXP) and 3-amino-2-oxopropyl phosphate (1-amino-acetone-3-phosphate or AAP) to form pyridoxine 5'-phosphate (PNP) and inorganic phosphate. This chain is Pyridoxine 5'-phosphate synthase, found in Geobacter metallireducens (strain ATCC 53774 / DSM 7210 / GS-15).